Consider the following 1334-residue polypeptide: Lysine-specific demethylase 3A-B (1334 aa).

Disordered regions lie at residues 243–288 (DQND…KTSF), 352–382 (PGIQ…SQNL), and 514–533 (KPQE…VTYP). Residues 267–283 (TEVKQTRNEEVPSKDVT) show a composition bias toward basic and acidic residues. A C6-type zinc finger spans residues 684 to 709 (CDACDTTIFNLHWVCPKCGFGVCVDC). The short motif at 897–901 (LRNLL) is the LXXLL motif element. The JmjC domain maps to 1089–1294 (RREGKLNLAA…HCFCLTQEFR (206 aa)). The Fe cation site is built by H1133, D1135, and H1262.

It belongs to the JHDM2 histone demethylase family. Fe(2+) is required as a cofactor.

It localises to the cytoplasm. It is found in the nucleus. It carries out the reaction N(6),N(6)-dimethyl-L-lysyl(9)-[histone H3] + 2 2-oxoglutarate + 2 O2 = L-lysyl(9)-[histone H3] + 2 formaldehyde + 2 succinate + 2 CO2. Its function is as follows. Histone demethylase that specifically demethylates 'Lys-9' of histone H3, thereby playing a central role in histone code. Preferentially demethylates mono- and dimethylated H3 'Lys-9' residue, with a preference for dimethylated residue, while it has weak or no activity on trimethylated H3 'Lys-9'. Demethylation of Lys residue generates formaldehyde and succinate. This is Lysine-specific demethylase 3A-B (kdm3a-b) from Xenopus laevis (African clawed frog).